The chain runs to 248 residues: Triosephosphate isomerase (248 aa).

A substrate-binding site is contributed by 9–11 (NWK). Residue histidine 92 is the Electrophile of the active site. Glutamate 164 acts as the Proton acceptor in catalysis. Substrate is bound by residues glycine 170, serine 210, and 231–232 (GG).

This sequence belongs to the triosephosphate isomerase family. As to quaternary structure, homodimer.

It localises to the cytoplasm. It catalyses the reaction D-glyceraldehyde 3-phosphate = dihydroxyacetone phosphate. It participates in carbohydrate biosynthesis; gluconeogenesis. The protein operates within carbohydrate degradation; glycolysis; D-glyceraldehyde 3-phosphate from glycerone phosphate: step 1/1. In terms of biological role, involved in the gluconeogenesis. Catalyzes stereospecifically the conversion of dihydroxyacetone phosphate (DHAP) to D-glyceraldehyde-3-phosphate (G3P). The sequence is that of Triosephosphate isomerase from Mycoplasma capricolum subsp. capricolum (strain California kid / ATCC 27343 / NCTC 10154).